Consider the following 520-residue polypeptide: GMP synthase [glutamine-hydrolyzing] (520 aa).

A Glutamine amidotransferase type-1 domain is found at 9–202; it reads TVLIVDFGSQ…VHNIAGIEGD (194 aa). The active-site Nucleophile is cysteine 86. Catalysis depends on residues histidine 176 and glutamate 178. The GMPS ATP-PPase domain occupies 203 to 395; that stretch reads WTMRAYREHA…LGLPESFIGR (193 aa). 230–236 serves as a coordination point for ATP; sequence SGGVDSS.

In terms of assembly, homodimer.

It catalyses the reaction XMP + L-glutamine + ATP + H2O = GMP + L-glutamate + AMP + diphosphate + 2 H(+). Its pathway is purine metabolism; GMP biosynthesis; GMP from XMP (L-Gln route): step 1/1. Its function is as follows. Catalyzes the synthesis of GMP from XMP. In Mesorhizobium japonicum (strain LMG 29417 / CECT 9101 / MAFF 303099) (Mesorhizobium loti (strain MAFF 303099)), this protein is GMP synthase [glutamine-hydrolyzing].